The chain runs to 450 residues: Tubulin beta-3 chain (450 aa).

An MREI motif motif is present at residues methionine 1–isoleucine 4. Residues glutamine 11, glutamate 69, serine 138, glycine 142, threonine 143, and glycine 144 each coordinate GTP. Glutamate 69 contributes to the Mg(2+) binding site. Serine 172 carries the phosphoserine; by CDK1 modification. Residues asparagine 204 and asparagine 226 each contribute to the GTP site. The tract at residues tyrosine 422–lysine 450 is disordered. Over residues threonine 429 to lysine 450 the composition is skewed to acidic residues. Position 438 is a 5-glutamyl polyglutamate (glutamate 438). At serine 444 the chain carries Phosphoserine.

This sequence belongs to the tubulin family. As to quaternary structure, heterodimer of alpha- and beta-tubulin. A typical microtubule is a hollow water-filled tube with an outer diameter of 25 nm and an inner diameter of 15 nM. Alpha-beta heterodimers associate head-to-tail to form protofilaments running lengthwise along the microtubule wall with the beta-tubulin subunit facing the microtubule plus end conferring a structural polarity. Microtubules usually have 13 protofilaments but different protofilament numbers can be found in some organisms and specialized cells. Interacts with gamma-tubulin; the interaction allows microtubules to nucleate from the gamma-tubulin ring complex (gTuRC). Interacts with UNC5C (via cytoplasmic domain); this interaction is decreased by NTN1/Netrin-1. Interacts with NLRP5/MATER at cytoskeleton microtubules. Interacts with DPYSL5. Interacts with CFAP61. The cofactor is Mg(2+). In terms of processing, some glutamate residues at the C-terminus are polyglycylated, resulting in polyglycine chains on the gamma-carboxyl group. Glycylation is mainly limited to tubulin incorporated into axonemes (cilia and flagella) whereas glutamylation is prevalent in neuronal cells, centrioles, axonemes, and the mitotic spindle. Both modifications can coexist on the same protein on adjacent residues, and lowering polyglycylation levels increases polyglutamylation, and reciprocally. Cilia and flagella glycylation is required for their stability and maintenance. Flagella glycylation controls sperm motility. Post-translationally, some glutamate residues at the C-terminus are polyglutamylated, resulting in polyglutamate chains on the gamma-carboxyl group. Polyglutamylation plays a key role in microtubule severing by spastin (SPAST). SPAST preferentially recognizes and acts on microtubules decorated with short polyglutamate tails: severing activity by SPAST increases as the number of glutamates per tubulin rises from one to eight, but decreases beyond this glutamylation threshold. Glutamylation is also involved in cilia motility. Phosphorylated on Ser-172 by CDK1 during the cell cycle, from metaphase to telophase, but not in interphase. This phosphorylation inhibits tubulin incorporation into microtubules.

The protein resides in the cytoplasm. It localises to the cytoskeleton. Its subcellular location is the cell projection. It is found in the growth cone. The protein localises to the lamellipodium. The protein resides in the filopodium. Functionally, tubulin is the major constituent of microtubules, protein filaments consisting of alpha- and beta-tubulin heterodimers. Microtubules grow by the addition of GTP-tubulin dimers to the microtubule end, where a stabilizing cap forms. Below the cap, alpha-beta tubulin heterodimers are in GDP-bound state, owing to GTPase activity of alpha-tubulin. TUBB3 plays a critical role in proper axon guidance and maintenance. Binding of NTN1/Netrin-1 to its receptor UNC5C might cause dissociation of UNC5C from polymerized TUBB3 in microtubules and thereby lead to increased microtubule dynamics and axon repulsion. Plays a role in dorsal root ganglion axon projection towards the spinal cord. In Rattus norvegicus (Rat), this protein is Tubulin beta-3 chain (Tubb3).